The chain runs to 118 residues: Protein Rev (118 aa).

A Phosphoserine; by host CK2 modification is found at S5. Positions 18-26 (LIKILYQSN) are homomultimerization. The disordered stretch occupies residues 23–49 (YQSNPPPSPEGTRQARRNRRRRWRARQ). Residues 34–50 (TRQARRNRRRRWRARQR) carry the Nuclear localization signal and RNA-binding (RRE) motif. Positions 36 to 49 (QARRNRRRRWRARQ) are enriched in basic residues. Residues 73–84 (LQLPPLERLNLN) carry the Nuclear export signal and binding to XPO1 motif. The segment at 89-118 (CGASGTQGVGSPQISVESPTVLESGTEEQC) is disordered. S92 and S99 each carry phosphoserine; by host. The span at 92–112 (SGTQGVGSPQISVESPTVLES) shows a compositional bias: polar residues.

Belongs to the HIV-1 REV protein family. As to quaternary structure, homomultimer; when bound to the RRE. Multimeric assembly is essential for activity and may involve XPO1. Binds to human KPNB1, XPO1, TNPO1, RANBP5 and IPO7. Interacts with the viral Integrase. Interacts with human KHDRBS1. Interacts with human NAP1; this interaction decreases Rev multimerization and stimulates its activity. Interacts with human DEAD-box helicases DDX3 and DDX24; these interactions may serve for viral RNA export to the cytoplasm and packaging, respectively. Interacts with human PSIP1; this interaction may inhibit HIV-1 DNA integration by promoting dissociation of the Integrase-LEDGF/p75 complex. Post-translationally, asymmetrically arginine dimethylated at one site by host PRMT6. Methylation impairs the RNA-binding activity and export of viral RNA from the nucleus to the cytoplasm. Phosphorylated by protein kinase CK2. Presence of, and maybe binding to the N-terminus of the regulatory beta subunit of CK2 is necessary for CK2-mediated Rev's phosphorylation.

Its subcellular location is the host nucleus. It is found in the host nucleolus. It localises to the host cytoplasm. Its function is as follows. Escorts unspliced or incompletely spliced viral pre-mRNAs (late transcripts) out of the nucleus of infected cells. These pre-mRNAs carry a recognition sequence called Rev responsive element (RRE) located in the env gene, that is not present in fully spliced viral mRNAs (early transcripts). This function is essential since most viral proteins are translated from unspliced or partially spliced pre-mRNAs which cannot exit the nucleus by the pathway used by fully processed cellular mRNAs. Rev itself is translated from a fully spliced mRNA that readily exits the nucleus. Rev's nuclear localization signal (NLS) binds directly to KPNB1/Importin beta-1 without previous binding to KPNA1/Importin alpha-1. KPNB1 binds to the GDP bound form of RAN (Ran-GDP) and targets Rev to the nucleus. In the nucleus, the conversion from Ran-GDP to Ran-GTP dissociates Rev from KPNB1 and allows Rev's binding to the RRE in viral pre-mRNAs. Rev multimerization on the RRE via cooperative assembly exposes its nuclear export signal (NES) to the surface. Rev can then form a complex with XPO1/CRM1 and Ran-GTP, leading to nuclear export of the complex. Conversion from Ran-GTP to Ran-GDP mediates dissociation of the Rev/RRE/XPO1/RAN complex, so that Rev can return to the nucleus for a subsequent round of export. Beside KPNB1, also seems to interact with TNPO1/Transportin-1, RANBP5/IPO5 and IPO7/RANBP7 for nuclear import. The nucleoporin-like HRB/RIP is an essential cofactor that probably indirectly interacts with Rev to release HIV RNAs from the perinuclear region to the cytoplasm. This is Protein Rev from Human immunodeficiency virus type 1 group M subtype D (isolate Z2/CDC-Z34) (HIV-1).